The chain runs to 134 residues: MICSPQNNTGVIMKKRNFSAEFKRESAQLVVDQNYTVADAASAMDVGLSTMTRWVKQLRDERQGKTPKASPITPEQIEIRELRKKLQRIEMENEILKKATVDSIGQRNSYVKTWGCGGFLNETNIYSRGKSLCF.

Belongs to the transposase 8 family.

Functionally, involved in the transposition of the insertion sequence IS911. In Escherichia coli (strain K12), this protein is Putative transposase InsN for insertion sequence element IS911A (insN1).